An 855-amino-acid chain; its full sequence is Potassium channel AKT2 (855 aa).

Residues 1-12 (MKTSSFESASSS) are compositionally biased toward low complexity. Positions 1-24 (MKTSSFESASSSGGSGGGGGGGGG) are disordered. The Cytoplasmic portion of the chain corresponds to 1-75 (MKTSSFESAS…PLDSRYRCWD (75 aa)). Positions 13–24 (GGSGGGGGGGGG) are enriched in gly residues. The helical transmembrane segment at 76-96 (TFMVVLVAYSAWVYPFEVAFM) threads the bilayer. Residues 97–105 (NASPKGGLE) lie on the Extracellular side of the membrane. A helical membrane pass occupies residues 106 to 126 (VADIVVDLFFAVDIVLTFFVA). At 127-149 (YIDSRTQLLVRDRRRIATRYLST) the chain is on the cytoplasmic side. Residues 150 to 170 (FFIMDVASTIPFQGLAYIVTG) form a helical membrane-spanning segment. Residues 171–179 (EVRESPAFS) lie on the Extracellular side of the membrane. A helical; Voltage-sensor membrane pass occupies residues 180–200 (LLGILRLWRLRKVKQFFTRLE). At 201–214 (KDIRFNYFWIRCAR) the chain is on the cytoplasmic side. The chain crosses the membrane as a helical span at residues 215–235 (LIAVTLFLVHCAGCLYYLIAD). The Extracellular segment spans residues 236 to 262 (RYPHREKTWIGAVIPDFQEASLWIRYT). The segment at residues 263–282 (SSVYWSITTMTTVGYGDMHA) is an intramembrane region (pore-forming). At 283–285 (QNT) the chain is on the extracellular side. Residues 286 to 306 (VEMIFNIFYMLFNLGLTAYLI) traverse the membrane as a helical segment. Topologically, residues 307-855 (GNMTNLVVEG…VASMDSVSGS (549 aa)) are cytoplasmic. Residue 391-511 (LFKGVSREVL…VVIIKNFLKH (121 aa)) participates in a nucleoside 3',5'-cyclic phosphate binding. 5 ANK repeats span residues 536-565 (NIPC…DPDV), 569-598 (KGRT…NVNI), 602-631 (QGNT…VSSP), 634-663 (AAGD…AVDS), and 667-696 (DGAT…SVDR). The tract at residues 744 to 765 (EVGSSGDSRNGRRQSARSDGAH) is disordered. The region spanning 768-855 (RVSIYRGHPF…VASMDSVSGS (88 aa)) is the KHA domain.

This sequence belongs to the potassium channel family. Plant (TC 1.A.1.4) subfamily. The potassium channel is probably a homo- or heterotetrameric complex of pore-forming subunits.

The protein localises to the membrane. Its function is as follows. Probable inward-rectifying potassium channel. Assuming opened or closed conformations in response to the voltage difference across the membrane, the channel is activated by hyperpolarization. The sequence is that of Potassium channel AKT2 from Oryza sativa subsp. japonica (Rice).